We begin with the raw amino-acid sequence, 1877 residues long: Transmembrane protein 131 (1877 aa).

A signal peptide spans 1 to 20; the sequence is MGKRAGGAAAAAAAASTSSA. The Lumenal segment spans residues 21–1115; it reads AGLEPAAGRG…AEALPRPNWE (1095 aa). Residues 107 to 281 are papD-L domain; the sequence is RFEPPMLDFH…ETKGVMRASF (175 aa). The chain crosses the membrane as a helical span at residues 1116–1136; sequence LALYIIISGVMSALFLLVIGT. The Cytoplasmic portion of the chain corresponds to 1137 to 1877; that stretch reads AYLEAQGIWE…WSNSHFPHEN (741 aa). Positions 1197–1227 are enriched in polar residues; it reads NASSRPGTGSHRQCGTSVHPHSSHGSKNSAD. Disordered stretches follow at residues 1197–1573, 1590–1655, 1679–1707, and 1830–1852; these read NASS…SSST, LKQR…NPTF, SDFSSSLGISHIPVDSDGSDSSGLWSPVS, and NSAAAHTPSASGPADDLGQTYNP. The span at 1233–1258 shows a compositional bias: low complexity; it reads TRNSSSMSSRTSPQAAASQSTSKTSP. Over residues 1301–1311 the composition is skewed to pro residues; the sequence is QPPPPVPQHQE. Phosphoserine is present on residues serine 1318 and serine 1338. Basic and acidic residues-rich tracts occupy residues 1326 to 1339 and 1349 to 1360; these read SHPERASTTRHSSE and AMDKDFDHHDSS. Phosphoserine is present on serine 1371. Residues 1376 to 1391 show a composition bias toward basic residues; that stretch reads SKGKGKSLQQRKAKPP. The segment covering 1392-1414 has biased composition (basic and acidic residues); it reads KKQEEKEKRGKGKPQEDELKDAL. The span at 1420-1432 shows a compositional bias: low complexity; the sequence is SSTTTETSNPDTE. Polar residues-rich tracts occupy residues 1507–1523 and 1538–1550; these read TLASGSKSRNPPKTKGT and LPSSQELGNTSSS. Positions 1599-1608 are enriched in pro residues; the sequence is PASPSLPTAP. Positions 1609-1646 are enriched in low complexity; it reads CPFTSRGSYSSVVNSSGSDTKAKQTSSSKSKLTKAASL. Residues 1830–1839 show a composition bias toward polar residues; the sequence is NSAAAHTPSA. A phosphoserine mark is found at serine 1857 and serine 1865.

Belongs to the TMEM131 family. In terms of assembly, interacts (via PapD-L domain) with COL1A2 (via C-terminus); the interaction is direct, may occur with other collagen proteins, and is involved in assembly and TRAPPIII ER-to-Golgi transport complex-dependent secretion of collagen. Interacts (via C-terminus) with TRAPPC8 (via C-terminus); the interaction is direct.

It is found in the membrane. Collagen binding transmembrane protein involved in collagen secretion by recruiting the ER-to-Golgi transport complex TRAPPIII. May play a role in the immune response to viral infection. The protein is Transmembrane protein 131 of Mus musculus (Mouse).